We begin with the raw amino-acid sequence, 97 residues long: Signal recognition particle 19 kDa protein (97 aa).

It belongs to the SRP19 family. Part of the signal recognition particle protein translocation system, which is composed of SRP and FtsY. Archaeal SRP consists of a 7S RNA molecule of 300 nucleotides and two protein subunits: SRP54 and SRP19.

The protein resides in the cytoplasm. Involved in targeting and insertion of nascent membrane proteins into the cytoplasmic membrane. Binds directly to 7S RNA and mediates binding of the 54 kDa subunit of the SRP. This chain is Signal recognition particle 19 kDa protein, found in Pyrobaculum calidifontis (strain DSM 21063 / JCM 11548 / VA1).